The chain runs to 603 residues: 65-kDa microtubule-associated protein 7 (603 aa).

Coiled coils occupy residues 48–79 (KECLEIYRRKVDEAANSKAQLHQSLVSIEAEI), 131–186 (DIKA…EKSD), and 468–502 (RLVSILEDYKLTRKQQEEEKRRYRDQKKMQDLLIK). The segment at 501–559 (IKRRESIYGSKPSPRRSNSVRKTNGYNGDASVPPTPRRNSAGATNNDIMTTPRSYSSHR) is disordered. Ser513 bears the Phosphoserine mark. Composition is skewed to polar residues over residues 515–526 (RRSNSVRKTNGY) and 537–559 (RRNSAGATNNDIMTTPRSYSSHR). Phosphoserine is present on Ser599.

This sequence belongs to the MAP65/ASE1 family. As to quaternary structure, forms dimer. Binds to microtubules (MT).

It is found in the nucleus. Its subcellular location is the cytoplasm. It localises to the cytoskeleton. The protein resides in the spindle pole. The protein is 65-kDa microtubule-associated protein 7 (MAP65-7) of Arabidopsis thaliana (Mouse-ear cress).